Reading from the N-terminus, the 328-residue chain is uncharacterized protein (328 aa).

Residues 1–22 are disordered; the sequence is MPVKPNQPRPSTKQDPSSGASR. Residues 9-21 show a composition bias toward polar residues; it reads RPSTKQDPSSGAS. Transmembrane regions (helical) follow at residues 66–86, 126–146, 176–196, 221–241, 255–275, and 290–310; these read FSFLSLIPILMVSFATAGFVL, TVGLTGLLIALYSGVNWIGNL, FLSLIGLLLALVITLFLTSVA, LIALSISIFANYLLFLWILWV, GTLMAAIGFEALKFAMTVALP, and IGLMTFFYFFARLTLFCAAWI.

The protein to E.coli YhjD.

Its subcellular location is the cell inner membrane. This is an uncharacterized protein from Dickeya dadantii (strain 3937) (Erwinia chrysanthemi (strain 3937)).